A 288-amino-acid chain; its full sequence is Oxaloacetate decarboxylase (288 aa).

S47 is a substrate binding site. D85 is a Mg(2+) binding site. Substrate is bound by residues R156 and H232.

The protein belongs to the isocitrate lyase/PEP mutase superfamily. Oxaloacetate decarboxylase family. As to quaternary structure, homotetramer; dimer of dimers. It depends on Mg(2+) as a cofactor.

It carries out the reaction oxaloacetate + H(+) = pyruvate + CO2. Its function is as follows. Catalyzes the decarboxylation of oxaloacetate into pyruvate. Seems to play a role in maintaining cellular concentrations of bicarbonate and pyruvate. This is Oxaloacetate decarboxylase from Bradyrhizobium sp. (strain BTAi1 / ATCC BAA-1182).